Consider the following 342-residue polypeptide: MIKTYQYRSILNSRNVGIRFLKTLSPSPHSKDPNSKSIFDIGTKLIVNPPPQMADNQYVTHPLFPHPKYSDEDCEAVHFVHREPKTIGDKIADRGVKFCRASFDFVTGYKKPKDVNGMLKSWEGTRYEMTEEKWLTRCIFLESVAGVPGMVAAFIRHLHSLRLLKRDKAWIETLLDEAYNERMHLLTFIKIGNPSWFTRFIIYMGQGVFANLFFLVYLIKPRYCHRFVGYLEEEAVSTYTHLIKDIDSKRLPKFDDVNLPEISWLYWTDLNEKSTFRDLIQRIRADESKHREVNHTLANLEQKKDRNPFALKVEDVPKEQQPDEYSLKTPHPEGWNREQMRL.

A mitochondrion-targeting transit peptide spans methionine 1–phenylalanine 20. Residues leucine 135–isoleucine 155 traverse the membrane as a helical segment. Positions 142, 181, and 184 each coordinate Fe cation. Residues phenylalanine 200–lysine 220 form a helical membrane-spanning segment. Positions 232, 287, and 290 each coordinate Fe cation. Composition is skewed to basic and acidic residues over residues proline 308–glutamine 321 and proline 330–leucine 342. The segment at proline 308–leucine 342 is disordered.

The protein belongs to the alternative oxidase family. Homodimer; disulfide-linked. Fe cation is required as a cofactor.

It localises to the mitochondrion inner membrane. Its function is as follows. Catalyzes cyanide-resistant oxygen consumption. May increase respiration when the cytochrome respiratory pathway is restricted, or in response to low temperatures. The sequence is that of Alternative oxidase, mitochondrial (AOX1) from Wickerhamomyces anomalus (Yeast).